Consider the following 507-residue polypeptide: Acetylcholine receptor subunit beta-type lev-1 (507 aa).

The N-terminal stretch at Met-1–Thr-31 is a signal peptide. Residues Asn-28, Asn-58, and Asn-109 are each glycosylated (N-linked (GlcNAc...) asparagine). The Extracellular portion of the chain corresponds to Cys-32–Ser-138. The chain crosses the membrane as a helical span at residues Phe-139–Tyr-159. Cys-163 and Cys-177 form a disulfide bridge. 3 helical membrane-spanning segments follow: residues Val-243 to Pro-263, Gly-271 to Leu-291, and Leu-305 to Ile-325. The segment at Gly-373–His-392 is disordered. A compositionally biased stretch (basic and acidic residues) spans Asn-379 to His-392. Residues Phe-454–Ala-474 traverse the membrane as a helical segment.

The protein belongs to the ligand-gated ion channel (TC 1.A.9) family. Acetylcholine receptor (TC 1.A.9.1) subfamily. As to quaternary structure, interacts with unc-29. Component of nicotinic acetylcholine receptor composed of 2 non-alpha subunits lev-1 and unc-29, and 3 alpha subunits unc-38, unc-63 and lev-8.

Its subcellular location is the postsynaptic cell membrane. It is found in the cell membrane. Its function is as follows. Non-alpha subunit of nicotinic acetylcholine receptor (nAChR). Involved in nAChR sensitivity to nicotine. The chain is Acetylcholine receptor subunit beta-type lev-1 (lev-1) from Caenorhabditis elegans.